The sequence spans 407 residues: Peptidase T (407 aa).

Position 82 (His82) interacts with Zn(2+). The active site involves Asp84. Position 143 (Asp143) interacts with Zn(2+). Glu177 (proton acceptor) is an active-site residue. The Zn(2+) site is built by Glu178, Asp200, and His382.

This sequence belongs to the peptidase M20B family. Zn(2+) serves as cofactor.

It is found in the cytoplasm. The enzyme catalyses Release of the N-terminal residue from a tripeptide.. Cleaves the N-terminal amino acid of tripeptides. In Streptococcus pyogenes serotype M1, this protein is Peptidase T.